The sequence spans 82 residues: Penaeidin-3h (82 aa).

The first 19 residues, 1–19 (MRLVVCLVFLASFALVCQG), serve as a signal peptide directing secretion. The residue at position 20 (Q20) is a Pyrrolidone carboxylic acid. Intrachain disulfides connect C55-C73 and C67-C74. S81 carries the serine amide modification.

It belongs to the penaeidin family.

It localises to the cytoplasmic granule. In terms of biological role, antibacterial and antifungal activity. Presents chitin-binding activity. The protein is Penaeidin-3h of Penaeus vannamei (Whiteleg shrimp).